The sequence spans 21 residues: FLPKMSTKLRVPYRRGTKDYH.

Expressed by the venom gland.

The protein resides in the secreted. Its function is as follows. Antimicrobial peptide against both Gram-positive, -negative and yeast. Also induces histamine release by mast cells and shows moderate hemolytic activities against both human and rabbit red cells. This chain is Antimicrobial peptide scolopin-1, found in Scolopendra mutilans (Chinese red-headed centipede).